A 343-amino-acid polypeptide reads, in one-letter code: 2-deoxy-scyllo-inosamine dehydrogenase (343 aa).

Positions 37, 59, 91, 94, 97, 105, and 146 each coordinate Zn(2+).

This sequence belongs to the zinc-containing alcohol dehydrogenase family. DOIA dehydrogenase subfamily. Zn(2+) serves as cofactor.

The catalysed reaction is 2-deoxy-scyllo-inosamine + NADP(+) = 3-amino-2,3-dideoxy-scyllo-inosose + NADPH + H(+). It carries out the reaction 2-deoxy-scyllo-inosamine + NAD(+) = 3-amino-2,3-dideoxy-scyllo-inosose + NADH + H(+). It participates in metabolic intermediate biosynthesis; 2-deoxystreptamine biosynthesis; 2-deoxystreptamine from D-glucose 6-phosphate: step 3/4. Its pathway is antibiotic biosynthesis; kanamycin biosynthesis. Its function is as follows. Catalyzes the oxidation of 2-deoxy-scyllo-inosamine (DOIA) with NAD(+) or NADP(+), forming 3-amino-2,3-dideoxy-scyllo-inosose (amino-DOI). This chain is 2-deoxy-scyllo-inosamine dehydrogenase (kanE), found in Streptomyces kanamyceticus.